A 384-amino-acid chain; its full sequence is Putative glycosyltransferase EpsF (384 aa).

This sequence belongs to the glycosyltransferase group 1 family. Glycosyltransferase 4 subfamily.

May be involved in the production of the exopolysaccharide (EPS) component of the extracellular matrix during biofilm formation. EPS is responsible for the adhesion of chains of cells into bundles. Required for biofilm maintenance. This is Putative glycosyltransferase EpsF (epsF) from Bacillus subtilis (strain 168).